We begin with the raw amino-acid sequence, 265 residues long: Sulfur carrier protein FdhD (265 aa).

Cysteine 107 acts as the Cysteine persulfide intermediate in catalysis.

It belongs to the FdhD family.

It is found in the cytoplasm. In terms of biological role, required for formate dehydrogenase (FDH) activity. Acts as a sulfur carrier protein that transfers sulfur from IscS to the molybdenum cofactor prior to its insertion into FDH. The sequence is that of Sulfur carrier protein FdhD from Staphylococcus aureus (strain MRSA252).